The sequence spans 297 residues: Small ribosomal subunit protein uS2 (297 aa).

Residues 276–297 are disordered; it reads DWASSAPAEGWAGEAPATEAKW.

This sequence belongs to the universal ribosomal protein uS2 family. Component of the small ribosomal subunit. Mature ribosomes consist of a small (40S) and a large (60S) subunit. The 40S subunit contains about 33 different proteins and 1 molecule of RNA (18S). The 60S subunit contains about 49 different proteins and 3 molecules of RNA (25S, 5.8S and 5S). Interacts with RPS21.

The protein localises to the cytoplasm. Its function is as follows. Required for the assembly and/or stability of the 40S ribosomal subunit. Required for the processing of the 20S rRNA-precursor to mature 18S rRNA in a late step of the maturation of 40S ribosomal subunits. The polypeptide is Small ribosomal subunit protein uS2 (Uncinocarpus reesii (strain UAMH 1704)).